The following is a 348-amino-acid chain: Lysophosphatidic acid receptor 2 (348 aa).

The Extracellular portion of the chain corresponds to 1 to 30 (MGQCYYNETIGFFYNNSGKELSLHWRPKDV). Residues Asn-7 and Asn-15 are each glycosylated (N-linked (GlcNAc...) asparagine). A helical membrane pass occupies residues 31 to 51 (VVVALGLTVSVLVLLTNLLVI). The Cytoplasmic segment spans residues 52 to 66 (AAIASNRRFHQPIYY). The helical transmembrane segment at 67–87 (LLGNLAAADLFAGMAYLFLMF) threads the bilayer. Topologically, residues 88–104 (HTGPRTARLSIKGWFLR) are extracellular. Residues 105 to 124 (QGLLDTSLTASVATLLAIAV) traverse the membrane as a helical segment. Residues 125–144 (ERHRSVMAVQLHSRLPRGRV) lie on the Cytoplasmic side of the membrane. The chain crosses the membrane as a helical span at residues 145–165 (VTLIVGVWAAALGLGLLPAHF). Topologically, residues 166–185 (WHCLCDLDSCSRMVPLFSRS) are extracellular. The chain crosses the membrane as a helical span at residues 186-206 (YLAAWALSSLLVFLLMVAVYT). At 207–239 (RIFFYVRRRVERMAEHVSCHPRYRETTLSLVKT) the chain is on the cytoplasmic side. The helical transmembrane segment at 240-260 (VVIILGAFVVCWTPGQVVLLL) threads the bilayer. Residues 261-270 (DGLDCKSCNV) are Extracellular-facing. Residues 271-291 (LAVEKYFLLLAEANSLVNAVV) traverse the membrane as a helical segment. Residues 292–348 (YSCRDAEMRRTFRRLLCCMCLRWSSHKSARYSASAQTGASTRIMLPENGRPLMDSTL) are Cytoplasmic-facing. Cys-308 carries S-palmitoyl cysteine lipidation. The PDZ-binding signature appears at 345 to 348 (DSTL).

The protein belongs to the G-protein coupled receptor 1 family. In terms of assembly, interacts with SLC9A3R2/NHERF2, MAGI3 and PLCB3. Interacts with RALA and GRK2. As to expression, most abundantly expressed in testes, kidney, and embryonic brain. Other organs also express the transcript, including heart, lung, spleen, thymus, stomach, and adult brain. Several have little or no expression, including liver, small intestine, and skeletal muscle.

It localises to the cell surface. The protein resides in the cell membrane. In terms of biological role, receptor for lysophosphatidic acid (LPA), a mediator of diverse cellular activities. Seems to be coupled to the G(i)/G(o), G(12)/G(13), and G(q) families of heteromeric G proteins. Plays a key role in phospholipase C-beta (PLC-beta) signaling pathway Stimulates phospholipase C (PLC) activity in a manner that is independent of RALA activation. The sequence is that of Lysophosphatidic acid receptor 2 from Mus musculus (Mouse).